The chain runs to 346 residues: DNA primase small subunit PriS (346 aa).

Active-site residues include Asp97, Asp99, and Asp278.

Belongs to the eukaryotic-type primase small subunit family. Heterodimer of a small subunit (PriS) and a large subunit (PriL). Requires Mg(2+) as cofactor. The cofactor is Mn(2+).

Its function is as follows. Catalytic subunit of DNA primase, an RNA polymerase that catalyzes the synthesis of short RNA molecules used as primers for DNA polymerase during DNA replication. The small subunit contains the primase catalytic core and has DNA synthesis activity on its own. Binding to the large subunit stabilizes and modulates the activity, increasing the rate of DNA synthesis while decreasing the length of the DNA fragments, and conferring RNA synthesis capability. The DNA polymerase activity may enable DNA primase to also catalyze primer extension after primer synthesis. May also play a role in DNA repair. This is DNA primase small subunit PriS from Thermococcus onnurineus (strain NA1).